The sequence spans 450 residues: Phosphoglucosamine mutase (450 aa).

Residue Ser104 is the Phosphoserine intermediate of the active site. The Mg(2+) site is built by Ser104, Asp245, Asp247, and Asp249. The residue at position 104 (Ser104) is a Phosphoserine.

This sequence belongs to the phosphohexose mutase family. It depends on Mg(2+) as a cofactor. Post-translationally, activated by phosphorylation.

It carries out the reaction alpha-D-glucosamine 1-phosphate = D-glucosamine 6-phosphate. Its function is as follows. Catalyzes the conversion of glucosamine-6-phosphate to glucosamine-1-phosphate. In Phenylobacterium zucineum (strain HLK1), this protein is Phosphoglucosamine mutase.